Consider the following 275-residue polypeptide: Bis(5'-nucleosyl)-tetraphosphatase, symmetrical (275 aa).

It belongs to the Ap4A hydrolase family.

The catalysed reaction is P(1),P(4)-bis(5'-adenosyl) tetraphosphate + H2O = 2 ADP + 2 H(+). Functionally, hydrolyzes diadenosine 5',5'''-P1,P4-tetraphosphate to yield ADP. In Pasteurella multocida (strain Pm70), this protein is Bis(5'-nucleosyl)-tetraphosphatase, symmetrical (apaH).